The sequence spans 503 residues: Cysteine--tRNA ligase (503 aa).

Zn(2+) is bound at residue Cys31. Positions 33–43 (PTVYDYAHIGN) match the 'HIGH' region motif. Residues Cys225, His264, and Glu268 each coordinate Zn(2+). The 'KMSKS' region signature appears at 297–301 (KMSKS). ATP is bound at residue Lys300.

The protein belongs to the class-I aminoacyl-tRNA synthetase family. In terms of assembly, monomer. Zn(2+) serves as cofactor.

The protein resides in the cytoplasm. The enzyme catalyses tRNA(Cys) + L-cysteine + ATP = L-cysteinyl-tRNA(Cys) + AMP + diphosphate. The sequence is that of Cysteine--tRNA ligase from Bartonella tribocorum (strain CIP 105476 / IBS 506).